The chain runs to 309 residues: Olfactory receptor 7A40 (309 aa).

Residues 1–26 (MELKNDTQISKFILLGISEDPLWQPF) are Extracellular-facing. N5 carries N-linked (GlcNAc...) asparagine glycosylation. The helical transmembrane segment at 27-47 (LFGLFLFMYLVTLLGNLLIII) threads the bilayer. At 48–57 (ATITDSHLHT) the chain is on the cytoplasmic side. The helical transmembrane segment at 58–78 (PMYFFLSNLSFADICFTSASI) threads the bilayer. Topologically, residues 79-97 (PKMLVNIQTKNKVITYEGC) are extracellular. Cysteines 97 and 179 form a disulfide. A helical transmembrane segment spans residues 98-118 (ISQVFFFILFGVLDNFLLAVM). Topologically, residues 119-139 (AYDRYVAICHPLHYMVIMNCR) are cytoplasmic. Residues 140–160 (LCGFLVLGSWVTTALNSLLQS) traverse the membrane as a helical segment. Residues 161-196 (SMALRLSFCTDLKIPHFVCELNQLVLLACNDTFPND) are Extracellular-facing. The helical transmembrane segment at 197–217 (MVMYFAAILLGGGPLAGILYS) threads the bilayer. Over 218-244 (YSKIVSSIRAISSSQGKYKAFSTCASH) the chain is Cytoplasmic. Residues 245–265 (LSVVSLFYSTLLGVYLSSSFT) traverse the membrane as a helical segment. The Extracellular portion of the chain corresponds to 266 to 269 (QNSH). Residues 270 to 292 (STARASVMYSVVTPMLNPFIYSL) traverse the membrane as a helical segment. At 293-309 (RNKDLMGALRRLLRRKS) the chain is on the cytoplasmic side.

This sequence belongs to the G-protein coupled receptor 1 family.

The protein localises to the cell membrane. Odorant receptor. The sequence is that of Olfactory receptor 7A40 from Mus musculus (Mouse).